The primary structure comprises 527 residues: GMP synthase [glutamine-hydrolyzing] (527 aa).

In terms of domain architecture, Glutamine amidotransferase type-1 spans 19–212 (KIIVLDYGSQ…AFSICGAKGD (194 aa)). The active-site Nucleophile is cysteine 96. Residues histidine 186 and glutamate 188 contribute to the active site. The GMPS ATP-PPase domain maps to 213-402 (WSMANFVDMQ…LGMPDEVVWR (190 aa)). 240–246 (SGGVDSS) serves as a coordination point for ATP.

In terms of assembly, homodimer.

It catalyses the reaction XMP + L-glutamine + ATP + H2O = GMP + L-glutamate + AMP + diphosphate + 2 H(+). It functions in the pathway purine metabolism; GMP biosynthesis; GMP from XMP (L-Gln route): step 1/1. In terms of biological role, catalyzes the synthesis of GMP from XMP. This is GMP synthase [glutamine-hydrolyzing] from Streptococcus thermophilus (strain CNRZ 1066).